We begin with the raw amino-acid sequence, 188 residues long: Elongation factor P (188 aa).

Belongs to the elongation factor P family.

The protein resides in the cytoplasm. Its pathway is protein biosynthesis; polypeptide chain elongation. Functionally, involved in peptide bond synthesis. Stimulates efficient translation and peptide-bond synthesis on native or reconstituted 70S ribosomes in vitro. Probably functions indirectly by altering the affinity of the ribosome for aminoacyl-tRNA, thus increasing their reactivity as acceptors for peptidyl transferase. The sequence is that of Elongation factor P from Ralstonia nicotianae (strain ATCC BAA-1114 / GMI1000) (Ralstonia solanacearum).